Here is a 134-residue protein sequence, read N- to C-terminus: Small ribosomal subunit protein uS9 (134 aa).

A disordered region spans residues 113-134 (REVERKKYGLKKARRAPQFSKR). A compositionally biased stretch (basic residues) spans 120-134 (YGLKKARRAPQFSKR).

The protein belongs to the universal ribosomal protein uS9 family.

This is Small ribosomal subunit protein uS9 from Thermotoga petrophila (strain ATCC BAA-488 / DSM 13995 / JCM 10881 / RKU-1).